The primary structure comprises 266 residues: DNA-directed RNA polymerase subunit Rpo3 (266 aa).

Residues C205, C208, and C211 each contribute to the [3Fe-4S] cluster site.

This sequence belongs to the archaeal Rpo3/eukaryotic RPB3 RNA polymerase subunit family. As to quaternary structure, part of the RNA polymerase complex. [3Fe-4S] cluster serves as cofactor.

The protein localises to the cytoplasm. The catalysed reaction is RNA(n) + a ribonucleoside 5'-triphosphate = RNA(n+1) + diphosphate. Its function is as follows. DNA-dependent RNA polymerase (RNAP) catalyzes the transcription of DNA into RNA using the four ribonucleoside triphosphates as substrates. The polypeptide is DNA-directed RNA polymerase subunit Rpo3 (Methanosarcina mazei (strain ATCC BAA-159 / DSM 3647 / Goe1 / Go1 / JCM 11833 / OCM 88) (Methanosarcina frisia)).